A 376-amino-acid polypeptide reads, in one-letter code: Alanine racemase (376 aa).

Lys-36 (proton acceptor; specific for D-alanine) is an active-site residue. N6-(pyridoxal phosphate)lysine is present on Lys-36. Arg-134 is a binding site for substrate. Tyr-266 serves as the catalytic Proton acceptor; specific for L-alanine. Substrate is bound at residue Met-314.

Belongs to the alanine racemase family. It depends on pyridoxal 5'-phosphate as a cofactor.

It carries out the reaction L-alanine = D-alanine. It functions in the pathway amino-acid biosynthesis; D-alanine biosynthesis; D-alanine from L-alanine: step 1/1. Its function is as follows. Catalyzes the interconversion of L-alanine and D-alanine. May also act on other amino acids. The protein is Alanine racemase (alr) of Nitratidesulfovibrio vulgaris (strain DP4) (Desulfovibrio vulgaris).